We begin with the raw amino-acid sequence, 285 residues long: N(G),N(G)-dimethylarginine dimethylaminohydrolase 1 (285 aa).

The residue at position 2 (Ala-2) is an N-acetylalanine. Leu-30 contacts substrate. Ser-33 is subject to Phosphoserine. Asp-73, Glu-78, Asp-79, Arg-98, and Arg-145 together coordinate substrate. Catalysis depends on His-173, which acts as the Proton donor. Position 222 is an S-nitrosocysteine (Cys-222). Substrate is bound at residue Val-268. Residue Cys-274 is modified to S-nitrosocysteine. The active-site Nucleophile is the Cys-274. Cys-274 serves as a coordination point for Zn(2+).

Belongs to the DDAH family. Monomer. As to expression, detected in skeletal muscle, lung, heart, liver, kidney and brain (at protein level).

It catalyses the reaction N(omega),N(omega)-dimethyl-L-arginine + H2O = dimethylamine + L-citrulline. The catalysed reaction is N(omega)-methyl-L-arginine + H2O = L-citrulline + methylamine. Its activity is regulated as follows. Inhibited by zinc ions. Functionally, hydrolyzes N(G),N(G)-dimethyl-L-arginine (ADMA) and N(G)-monomethyl-L-arginine (MMA) which act as inhibitors of NOS. Has therefore a role in the regulation of nitric oxide generation. This chain is N(G),N(G)-dimethylarginine dimethylaminohydrolase 1 (Ddah1), found in Mus musculus (Mouse).